Here is a 728-residue protein sequence, read N- to C-terminus: Phosphoribosylformylglycinamidine synthase subunit PurL (728 aa).

Histidine 40 is a catalytic residue. Residues tyrosine 43 and lysine 82 each coordinate ATP. Glutamate 84 is a Mg(2+) binding site. Residues 85–88 and arginine 107 each bind substrate; that span reads SHNH. Residue histidine 86 is the Proton acceptor of the active site. Position 108 (aspartate 108) interacts with Mg(2+). Glutamine 231 provides a ligand contact to substrate. Aspartate 259 contributes to the Mg(2+) binding site. 303 to 305 serves as a coordination point for substrate; sequence ESQ. ATP is bound by residues asparagine 483 and glycine 520. Asparagine 521 provides a ligand contact to Mg(2+). Serine 523 provides a ligand contact to substrate.

It belongs to the FGAMS family. In terms of assembly, monomer. Part of the FGAM synthase complex composed of 1 PurL, 1 PurQ and 2 PurS subunits.

It is found in the cytoplasm. It catalyses the reaction N(2)-formyl-N(1)-(5-phospho-beta-D-ribosyl)glycinamide + L-glutamine + ATP + H2O = 2-formamido-N(1)-(5-O-phospho-beta-D-ribosyl)acetamidine + L-glutamate + ADP + phosphate + H(+). Its pathway is purine metabolism; IMP biosynthesis via de novo pathway; 5-amino-1-(5-phospho-D-ribosyl)imidazole from N(2)-formyl-N(1)-(5-phospho-D-ribosyl)glycinamide: step 1/2. Its function is as follows. Part of the phosphoribosylformylglycinamidine synthase complex involved in the purines biosynthetic pathway. Catalyzes the ATP-dependent conversion of formylglycinamide ribonucleotide (FGAR) and glutamine to yield formylglycinamidine ribonucleotide (FGAM) and glutamate. The FGAM synthase complex is composed of three subunits. PurQ produces an ammonia molecule by converting glutamine to glutamate. PurL transfers the ammonia molecule to FGAR to form FGAM in an ATP-dependent manner. PurS interacts with PurQ and PurL and is thought to assist in the transfer of the ammonia molecule from PurQ to PurL. The protein is Phosphoribosylformylglycinamidine synthase subunit PurL of Carboxydothermus hydrogenoformans (strain ATCC BAA-161 / DSM 6008 / Z-2901).